The following is a 386-amino-acid chain: Ribonucleoside-diphosphate reductase subunit M2 (386 aa).

S20 carries the post-translational modification Phosphoserine. T33 bears the Phosphothreonine mark. A Cy motif is present at residues 49–51 (RRI). Fe cation is bound by residues D139, E170, and H173. Y177 is an active-site residue. Residues E233, E267, and H270 each coordinate Fe cation.

The protein belongs to the ribonucleoside diphosphate reductase small chain family. As to quaternary structure, heterodimer of a large and a small subunit. Interacts (via Cy motif and when phosphorylated at Thr-33) with CCNF; the interaction occurs exclusively in G2 and early M. Fe cation serves as cofactor. Post-translationally, phosphorylation on Ser-20 relieves the inhibitory effect on Wnt signaling. Phosphorylated on Thr-33 by CDK1 and CDK2; predominantly in G2 and M phase. In terms of processing, ubiquitinated by the SCF(CCNF) E3 ubiquitin-protein ligase complex; leading to its degradation by the proteasome.

Its subcellular location is the cytoplasm. The protein localises to the nucleus. The catalysed reaction is a 2'-deoxyribonucleoside 5'-diphosphate + [thioredoxin]-disulfide + H2O = a ribonucleoside 5'-diphosphate + [thioredoxin]-dithiol. In terms of biological role, provides the precursors necessary for DNA synthesis. Catalyzes the biosynthesis of deoxyribonucleotides from the corresponding ribonucleotides. Inhibits Wnt signaling. The sequence is that of Ribonucleoside-diphosphate reductase subunit M2 (RRM2) from Mesocricetus auratus (Golden hamster).